Consider the following 548-residue polypeptide: Aromatic ammonia-lyase (548 aa).

The Proton donor/acceptor role is filled by Y55. The segment at residues 144–146 (ASG) is a cross-link (5-imidazolinone (Ala-Gly)). S145 is subject to 2,3-didehydroalanine (Ser). Residues N200, Q288, R294, N324, K396, E425, and N428 each coordinate (E)-cinnamate.

The protein belongs to the PAL/histidase family. As to quaternary structure, homotetramer. Contains an active site 4-methylidene-imidazol-5-one (MIO), which is formed autocatalytically by cyclization and dehydration of residues Ala-Ser-Gly.

The catalysed reaction is L-phenylalanine = (E)-cinnamate + NH4(+). It carries out the reaction L-tyrosine = (E)-4-coumarate + NH4(+). The enzyme catalyses 3,4-dimethoxy-L-phenylalanine = 3,4-dimethoxy-(E)-cinnamate + NH4(+). Its pathway is phenylpropanoid metabolism; trans-cinnamate biosynthesis; trans-cinnamate from L-phenylalanine: step 1/1. In terms of biological role, aromatic ammonia-lyase (AAL) that shows reduced activity to catalyze the non-oxidative ammonia elimination from the canonical AAL substrates L-Phe and L-Tyr, contrasted by its pronounced efficiency towards substrates with electron-donor aromatic substituents such as 3,4-dimethoxy-L-phenylalanine. Is also able to catalyze the reverse reaction in vitro, i.e. the ammonia addition reaction to cinnamate derivatives, producing enantiopure phenylalanine derivatives. Shows no activity with L-His. The chain is Aromatic ammonia-lyase from Loktanella atrilutea.